The following is a 123-amino-acid chain: DNA-directed RNA polymerase subunit omega (123 aa).

Residues 72–100 (QRVLPSEDEEDAAREERGQQMEALPAPPV) are disordered.

It belongs to the RNA polymerase subunit omega family. As to quaternary structure, the RNAP catalytic core consists of 2 alpha, 1 beta, 1 beta' and 1 omega subunit. When a sigma factor is associated with the core the holoenzyme is formed, which can initiate transcription.

The enzyme catalyses RNA(n) + a ribonucleoside 5'-triphosphate = RNA(n+1) + diphosphate. Functionally, promotes RNA polymerase assembly. Latches the N- and C-terminal regions of the beta' subunit thereby facilitating its interaction with the beta and alpha subunits. The polypeptide is DNA-directed RNA polymerase subunit omega (Maricaulis maris (strain MCS10) (Caulobacter maris)).